A 143-amino-acid polypeptide reads, in one-letter code: Transcriptional regulator MraZ (143 aa).

SpoVT-AbrB domains follow at residues 5–47 (EYLH…PLDE) and 76–119 (ATEC…SQAL).

It belongs to the MraZ family. As to quaternary structure, forms oligomers.

The protein resides in the cytoplasm. The protein localises to the nucleoid. The chain is Transcriptional regulator MraZ from Desulfitobacterium hafniense (strain DSM 10664 / DCB-2).